The primary structure comprises 374 residues: Flagellar P-ring protein (374 aa).

A signal peptide spans 1-29 (MRRVRTTRLFQVACAAIVALASSAMSAHA).

Belongs to the FlgI family. The basal body constitutes a major portion of the flagellar organelle and consists of four rings (L,P,S, and M) mounted on a central rod.

It localises to the periplasm. The protein localises to the bacterial flagellum basal body. Functionally, assembles around the rod to form the L-ring and probably protects the motor/basal body from shearing forces during rotation. This Bradyrhizobium sp. (strain BTAi1 / ATCC BAA-1182) protein is Flagellar P-ring protein.